The chain runs to 155 residues: Transcriptional repressor NrdR (155 aa).

Positions 1–11 (MECPNCHQNAS) are enriched in polar residues. The disordered stretch occupies residues 1–22 (MECPNCHQNASRVIDSRPSDEN). A zinc finger spans residues 3-34 (CPNCHQNASRVIDSRPSDENRAIRRRRECENC). The 91-residue stretch at 49–139 (LLVVKNDGTR…IYREFKDMSS (91 aa)) folds into the ATP-cone domain.

The protein belongs to the NrdR family. Zn(2+) serves as cofactor.

Functionally, negatively regulates transcription of bacterial ribonucleotide reductase nrd genes and operons by binding to NrdR-boxes. In Lactobacillus acidophilus (strain ATCC 700396 / NCK56 / N2 / NCFM), this protein is Transcriptional repressor NrdR.